The following is a 402-amino-acid chain: S-adenosylmethionine synthase (402 aa).

ATP is bound at residue histidine 17. Mg(2+) is bound at residue aspartate 19. Glutamate 45 provides a ligand contact to K(+). L-methionine contacts are provided by glutamate 58 and glutamine 101. Positions 101–111 are flexible loop; sequence QSSDIADGVNE. ATP contacts are provided by residues 177–179, 244–245, aspartate 253, 259–260, alanine 276, and lysine 280; these read DAK, RF, and RK. Residue aspartate 253 coordinates L-methionine. Lysine 284 provides a ligand contact to L-methionine.

This sequence belongs to the AdoMet synthase family. In terms of assembly, homotetramer; dimer of dimers. Mg(2+) serves as cofactor. The cofactor is K(+).

It localises to the cytoplasm. It carries out the reaction L-methionine + ATP + H2O = S-adenosyl-L-methionine + phosphate + diphosphate. It functions in the pathway amino-acid biosynthesis; S-adenosyl-L-methionine biosynthesis; S-adenosyl-L-methionine from L-methionine: step 1/1. Catalyzes the formation of S-adenosylmethionine (AdoMet) from methionine and ATP. The overall synthetic reaction is composed of two sequential steps, AdoMet formation and the subsequent tripolyphosphate hydrolysis which occurs prior to release of AdoMet from the enzyme. The chain is S-adenosylmethionine synthase from Lactobacillus johnsonii (strain CNCM I-12250 / La1 / NCC 533).